Here is a 44-residue protein sequence, read N- to C-terminus: Thaumatin-like protein 5 (44 aa).

Belongs to the thaumatin family.

This Glebionis coronaria (Crown daisy) protein is Thaumatin-like protein 5.